The chain runs to 427 residues: Probable protein phosphatase 2C 64 (427 aa).

The segment at 1–36 is disordered; it reads MGNCVARSGTAVDAGGDGGEDGKRRRRRWKAPREDQ. The PPM-type phosphatase domain occupies 53 to 331; it reads TATVYTQQGR…DDCAVVCLYL (279 aa). Mn(2+) contacts are provided by Asp-89, Gly-90, Asp-276, and Asp-322.

The protein belongs to the PP2C family. It depends on Mg(2+) as a cofactor. Requires Mn(2+) as cofactor.

The catalysed reaction is O-phospho-L-seryl-[protein] + H2O = L-seryl-[protein] + phosphate. The enzyme catalyses O-phospho-L-threonyl-[protein] + H2O = L-threonyl-[protein] + phosphate. The polypeptide is Probable protein phosphatase 2C 64 (Oryza sativa subsp. japonica (Rice)).